The sequence spans 444 residues: Tubulin beta-2 chain (444 aa).

GTP is bound by residues Gln11, Glu69, Ser138, Gly142, Thr143, Gly144, Asn204, and Asn226. Glu69 contacts Mg(2+). The disordered stretch occupies residues 422–444 (YQQYQDATAEEDDYDDGEGSTGD). Over residues 429-444 (TAEEDDYDDGEGSTGD) the composition is skewed to acidic residues.

It belongs to the tubulin family. In terms of assembly, dimer of alpha and beta chains. A typical microtubule is a hollow water-filled tube with an outer diameter of 25 nm and an inner diameter of 15 nM. Alpha-beta heterodimers associate head-to-tail to form protofilaments running lengthwise along the microtubule wall with the beta-tubulin subunit facing the microtubule plus end conferring a structural polarity. Microtubules usually have 13 protofilaments but different protofilament numbers can be found in some organisms and specialized cells. Mg(2+) serves as cofactor. As to expression, found in areas of rapidly dividing tissues.

The protein resides in the cytoplasm. It is found in the cytoskeleton. Tubulin is the major constituent of microtubules, a cylinder consisting of laterally associated linear protofilaments composed of alpha- and beta-tubulin heterodimers. Microtubules grow by the addition of GTP-tubulin dimers to the microtubule end, where a stabilizing cap forms. Below the cap, tubulin dimers are in GDP-bound state, owing to GTPase activity of alpha-tubulin. The sequence is that of Tubulin beta-2 chain (TUBB2) from Daucus carota (Wild carrot).